Consider the following 117-residue polypeptide: Large ribosomal subunit protein uL18 (117 aa).

The protein belongs to the universal ribosomal protein uL18 family. In terms of assembly, part of the 50S ribosomal subunit; part of the 5S rRNA/L5/L18/L25 subcomplex. Contacts the 5S and 23S rRNAs.

Its function is as follows. This is one of the proteins that bind and probably mediate the attachment of the 5S RNA into the large ribosomal subunit, where it forms part of the central protuberance. This chain is Large ribosomal subunit protein uL18, found in Pseudoalteromonas atlantica (strain T6c / ATCC BAA-1087).